The following is a 735-amino-acid chain: MLKLFSAFRKDKIWDFDGGIHPPEMKSQSNGTPLRQVPLAPRFVIPLKQHIGAEGELCVSVGDRVLRGQALTRGRGRMLPVHAPTSGTVIAIAPHSTAHPSALAELSVIIDADGEDRWIEREGWSDYRAHSREALIERIHQYGVAGLGGAGFPTGVKLQGGGDKITTLIINAAECEPYITADDRLMQDCAAQIVEGIRILAHILQPREVLIGIEDNKPQAISMLRAVLADAHDISLRVIPTKYPSGGAKQLTQILTGKQVPHGGRSSDIGVLMQNVGTAYAVKRAVIDGEPITERVVTLTGEAVSRPGNVWARLGTPVRHLLNDAGFCPSADQMVIMGGPLMGFTLPWLDVPVVKITNCLLAPSVTEMGAPQEEKSCIRCSACADACPADLLPQQLYWFSKGQQHDKATAHHIADCIECGACAWVCPSNIPLVQYFRQEKAEINAIRLEEKRAAEAKARFEARQARLEREKAARLARHKSAAVQPAAKDQDAIAAALARVKEKQAQATQPVVIQAGSLPDNSAVIAAREARKAQARAKQAAHPVADSAISGGDPRKAAVEAAIARAKARKQEQQAGSEPAEPVDPRKAAVEAAIARAKVRKQEQQAGSEPAEPVDPRKAAVEAAIARAKARKHEQQAGSEPAEPADPRKAAVEAAIARAKARKQEQQAGSEPAEPVDPRKAAVEAAIARAKARKQEQQAGSEPAEPADPRKAAVAAAIARVQAKKAAQQQVVNED.

4Fe-4S ferredoxin-type domains are found at residues 368 to 397 and 407 to 436; these read MGAP…QQLY and KATA…VQYF. [4Fe-4S] cluster contacts are provided by C377, C380, C383, C387, C416, C419, C422, and C426. Positions 562-713 are disordered; the sequence is AIARAKARKQ…AEPADPRKAA (152 aa).

This sequence belongs to the 4Fe4S bacterial-type ferredoxin family. RnfC subfamily. In terms of assembly, the complex is composed of six subunits: RsxA, RsxB, RsxC, RsxD, RsxE and RsxG. It depends on [4Fe-4S] cluster as a cofactor.

It localises to the cell inner membrane. Part of a membrane-bound complex that couples electron transfer with translocation of ions across the membrane. Required to maintain the reduced state of SoxR. The protein is Ion-translocating oxidoreductase complex subunit C of Salmonella newport (strain SL254).